The following is a 146-amino-acid chain: Hemoglobin subunit beta (146 aa).

Val-1 is subject to N-acetylvaline. The Globin domain maps to 2 to 146 (HLTGEEKAAV…VANALAHKYH (145 aa)). Thr-12 is subject to Phosphothreonine. Ser-44 is subject to Phosphoserine. Lys-59 bears the N6-acetyllysine mark. His-63 lines the heme b pocket. Lys-82 is subject to N6-acetyllysine. A heme b-binding site is contributed by His-92. Cys-93 is modified (S-nitrosocysteine). The residue at position 144 (Lys-144) is an N6-acetyllysine.

Belongs to the globin family. In terms of assembly, heterotetramer of two alpha chains and two beta chains. In terms of tissue distribution, red blood cells.

Functionally, involved in oxygen transport from the lung to the various peripheral tissues. The chain is Hemoglobin subunit beta (HBB) from Martes foina (Beech marten).